Reading from the N-terminus, the 140-residue chain is Putative pre-16S rRNA nuclease (140 aa).

It belongs to the YqgF nuclease family.

Its subcellular location is the cytoplasm. In terms of biological role, could be a nuclease involved in processing of the 5'-end of pre-16S rRNA. In Halalkalibacterium halodurans (strain ATCC BAA-125 / DSM 18197 / FERM 7344 / JCM 9153 / C-125) (Bacillus halodurans), this protein is Putative pre-16S rRNA nuclease.